A 383-amino-acid chain; its full sequence is Queuine tRNA-ribosyltransferase (383 aa).

D89 acts as the Proton acceptor in catalysis. Substrate is bound by residues 89-93 (DSGGF), D143, Q187, and G214. The RNA binding stretch occupies residues 245-251 (GVGDLID). D264 acts as the Nucleophile in catalysis. The segment at 269-273 (TRNAR) is RNA binding; important for wobble base 34 recognition. 4 residues coordinate Zn(2+): C302, C304, C307, and H333.

Belongs to the queuine tRNA-ribosyltransferase family. Homodimer. Within each dimer, one monomer is responsible for RNA recognition and catalysis, while the other monomer binds to the replacement base PreQ1. It depends on Zn(2+) as a cofactor.

The enzyme catalyses 7-aminomethyl-7-carbaguanine + guanosine(34) in tRNA = 7-aminomethyl-7-carbaguanosine(34) in tRNA + guanine. The protein operates within tRNA modification; tRNA-queuosine biosynthesis. Its function is as follows. Catalyzes the base-exchange of a guanine (G) residue with the queuine precursor 7-aminomethyl-7-deazaguanine (PreQ1) at position 34 (anticodon wobble position) in tRNAs with GU(N) anticodons (tRNA-Asp, -Asn, -His and -Tyr). Catalysis occurs through a double-displacement mechanism. The nucleophile active site attacks the C1' of nucleotide 34 to detach the guanine base from the RNA, forming a covalent enzyme-RNA intermediate. The proton acceptor active site deprotonates the incoming PreQ1, allowing a nucleophilic attack on the C1' of the ribose to form the product. After dissociation, two additional enzymatic reactions on the tRNA convert PreQ1 to queuine (Q), resulting in the hypermodified nucleoside queuosine (7-(((4,5-cis-dihydroxy-2-cyclopenten-1-yl)amino)methyl)-7-deazaguanosine). This Thermodesulfovibrio yellowstonii (strain ATCC 51303 / DSM 11347 / YP87) protein is Queuine tRNA-ribosyltransferase.